Reading from the N-terminus, the 273-residue chain is Dermonecrotic toxin LhSicTox-alphaIA2bii (273 aa).

Histidine 5 is an active-site residue. The Mg(2+) site is built by glutamate 25 and aspartate 27. Residue histidine 41 is the Nucleophile of the active site. 2 disulfide bridges follow: cysteine 45–cysteine 51 and cysteine 47–cysteine 190. Residue aspartate 85 coordinates Mg(2+).

Belongs to the arthropod phospholipase D family. Class II subfamily. Requires Mg(2+) as cofactor. As to expression, expressed by the venom gland.

The protein resides in the secreted. The enzyme catalyses an N-(acyl)-sphingosylphosphocholine = an N-(acyl)-sphingosyl-1,3-cyclic phosphate + choline. It carries out the reaction an N-(acyl)-sphingosylphosphoethanolamine = an N-(acyl)-sphingosyl-1,3-cyclic phosphate + ethanolamine. It catalyses the reaction a 1-acyl-sn-glycero-3-phosphocholine = a 1-acyl-sn-glycero-2,3-cyclic phosphate + choline. The catalysed reaction is a 1-acyl-sn-glycero-3-phosphoethanolamine = a 1-acyl-sn-glycero-2,3-cyclic phosphate + ethanolamine. Its function is as follows. Dermonecrotic toxins cleave the phosphodiester linkage between the phosphate and headgroup of certain phospholipids (sphingolipid and lysolipid substrates), forming an alcohol (often choline) and a cyclic phosphate. This toxin acts on sphingomyelin (SM). It may also act on ceramide phosphoethanolamine (CPE), lysophosphatidylcholine (LPC) and lysophosphatidylethanolamine (LPE), but not on lysophosphatidylserine (LPS), and lysophosphatidylglycerol (LPG). It acts by transphosphatidylation, releasing exclusively cyclic phosphate products as second products. Induces dermonecrosis, hemolysis, increased vascular permeability, edema, inflammatory response, and platelet aggregation. The polypeptide is Dermonecrotic toxin LhSicTox-alphaIA2bii (Loxosceles hirsuta (Recluse spider)).